Reading from the N-terminus, the 687-residue chain is uncharacterized protein (687 aa).

The next 14 membrane-spanning stretches (helical) occupy residues 28 to 48 (IIFT…TIVV), 66 to 86 (WAVT…GKLG), 94 to 114 (VLLG…LSQT), 126 to 146 (GVGA…VVPL), 154 to 174 (GVLG…GGWL), 182 to 202 (WAFW…ATAV), 211 to 231 (PVID…LIMA), 243 to 263 (SATI…FVWL), 287 to 307 (VLSF…PIYL), 320 to 340 (LRTL…GVLV), 348 to 368 (IFPV…SQMD), 378 to 398 (LYLV…VLIV), 414 to 434 (VTFF…ALFV), and 480 to 500 (LTQV…LALL).

This sequence belongs to the major facilitator superfamily. TCR/Tet family.

The protein localises to the cell membrane. This is an uncharacterized protein from Mycobacterium tuberculosis (strain CDC 1551 / Oshkosh).